The primary structure comprises 178 residues: Cytidylate kinase (178 aa).

Residue 7–15 (GLPGTGTTT) coordinates ATP.

The protein belongs to the cytidylate kinase family. Type 2 subfamily.

Its subcellular location is the cytoplasm. The enzyme catalyses CMP + ATP = CDP + ADP. It carries out the reaction dCMP + ATP = dCDP + ADP. This is Cytidylate kinase from Methanococcus aeolicus (strain ATCC BAA-1280 / DSM 17508 / OCM 812 / Nankai-3).